The sequence spans 48 residues: Sperm protamine P1 (48 aa).

Belongs to the protamine P1 family. Testis.

Its subcellular location is the nucleus. It localises to the chromosome. Functionally, protamines substitute for histones in the chromatin of sperm during the haploid phase of spermatogenesis. They compact sperm DNA into a highly condensed, stable and inactive complex. This is Sperm protamine P1 (PRM1) from Corynorhinus townsendii (Townsend's big-eared bat).